Reading from the N-terminus, the 177-residue chain is NADH-quinone oxidoreductase subunit B (177 aa).

Cysteine 56, cysteine 57, cysteine 121, and cysteine 151 together coordinate [4Fe-4S] cluster.

It belongs to the complex I 20 kDa subunit family. NDH-1 is composed of 14 different subunits. Subunits NuoB, C, D, E, F, and G constitute the peripheral sector of the complex. [4Fe-4S] cluster serves as cofactor.

It localises to the cell inner membrane. It catalyses the reaction a quinone + NADH + 5 H(+)(in) = a quinol + NAD(+) + 4 H(+)(out). Its function is as follows. NDH-1 shuttles electrons from NADH, via FMN and iron-sulfur (Fe-S) centers, to quinones in the respiratory chain. Couples the redox reaction to proton translocation (for every two electrons transferred, four hydrogen ions are translocated across the cytoplasmic membrane), and thus conserves the redox energy in a proton gradient. The protein is NADH-quinone oxidoreductase subunit B of Ruegeria pomeroyi (strain ATCC 700808 / DSM 15171 / DSS-3) (Silicibacter pomeroyi).